Reading from the N-terminus, the 336-residue chain is Alpha-glucoside transport system permease protein AglF (336 aa).

The next 8 membrane-spanning stretches (helical) occupy residues 4–24 (LIAA…YFWS), 55–75 (PWLF…YPVV), 113–133 (FLWL…IAAL), 146–166 (LIFM…KFIY), 176–196 (IGLL…WITL), 202–222 (FFLM…ILSA), 258–278 (IAVV…IVLA), and 304–324 (FGRG…IMIW). The ABC transmembrane type-1 domain occupies 109 to 325 (IFNNFLWLLV…ILVVPIMIWN (217 aa)).

This sequence belongs to the binding-protein-dependent transport system permease family. MalFG subfamily.

The protein resides in the cell inner membrane. In terms of biological role, part of the binding-protein-dependent transport system for alpha-glucosides such as sucrose, maltose and trehalose. Probably responsible for the translocation of the substrate across the membrane. In Rhizobium meliloti (strain 1021) (Ensifer meliloti), this protein is Alpha-glucoside transport system permease protein AglF (aglF).